The primary structure comprises 247 residues: Ribosomal RNA small subunit methyltransferase J (247 aa).

S-adenosyl-L-methionine contacts are provided by residues 101–102, 117–118, 153–154, and D171; these read RD, ER, and SS.

Belongs to the methyltransferase superfamily. RsmJ family.

It localises to the cytoplasm. The catalysed reaction is guanosine(1516) in 16S rRNA + S-adenosyl-L-methionine = N(2)-methylguanosine(1516) in 16S rRNA + S-adenosyl-L-homocysteine + H(+). Functionally, specifically methylates the guanosine in position 1516 of 16S rRNA. This Photorhabdus laumondii subsp. laumondii (strain DSM 15139 / CIP 105565 / TT01) (Photorhabdus luminescens subsp. laumondii) protein is Ribosomal RNA small subunit methyltransferase J.